The sequence spans 119 residues: Large ribosomal subunit protein uL24 (119 aa).

The protein belongs to the universal ribosomal protein uL24 family. In terms of assembly, part of the 50S ribosomal subunit.

One of two assembly initiator proteins, it binds directly to the 5'-end of the 23S rRNA, where it nucleates assembly of the 50S subunit. Functionally, located at the polypeptide exit tunnel on the outside of the subunit. This chain is Large ribosomal subunit protein uL24, found in Methanosarcina acetivorans (strain ATCC 35395 / DSM 2834 / JCM 12185 / C2A).